Consider the following 235-residue polypeptide: BPI fold-containing family A member 2 (235 aa).

The signal sequence occupies residues 1 to 20 (MFQLGSLVVLCGLLIGTSES). Cys-161 and Cys-204 are oxidised to a cystine.

Belongs to the BPI/LBP/Plunc superfamily. Plunc family. Expressed in parotid, submandibular and sublingual glands.

The protein resides in the secreted. In terms of biological role, has strong antibacterial activity against P.aeruginosa. The sequence is that of BPI fold-containing family A member 2 (Bpifa2) from Rattus norvegicus (Rat).